We begin with the raw amino-acid sequence, 361 residues long: Heme A synthase (361 aa).

A run of 8 helical transmembrane segments spans residues 22–42 (LWVR…VLVG), 109–129 (LLAR…WVTG), 139–159 (LLGI…MVAS), 175–195 (HLTI…GLAP), 208–228 (FAFW…LVAG), 269–289 (FVHR…AIAT), 303–323 (VLLF…LLMV), and 324–344 (VPMD…GFAT). H271 is a heme binding site. Position 332 (H332) interacts with heme.

The protein belongs to the COX15/CtaA family. Type 2 subfamily. Interacts with CtaB. Heme b is required as a cofactor.

The protein localises to the cell membrane. It carries out the reaction Fe(II)-heme o + 2 A + H2O = Fe(II)-heme a + 2 AH2. It participates in porphyrin-containing compound metabolism; heme A biosynthesis; heme A from heme O: step 1/1. In terms of biological role, catalyzes the conversion of heme O to heme A by two successive hydroxylations of the methyl group at C8. The first hydroxylation forms heme I, the second hydroxylation results in an unstable dihydroxymethyl group, which spontaneously dehydrates, resulting in the formyl group of heme A. This is Heme A synthase from Chelativorans sp. (strain BNC1).